The chain runs to 168 residues: Photosystem I assembly protein Ycf3 (168 aa).

3 TPR repeats span residues 35-68 (AFTYYRDGMSAQSEGNYAEALQNYYEAMRLEIDP), 72-105 (SYILYNIGLIHTSNGEHTKALEYYFRALERNPFL), and 120-153 (GEQAIRQGDSEIAEAWFDQAAEYWKQAIALTPGN).

This sequence belongs to the Ycf3 family.

The protein resides in the plastid. Its subcellular location is the chloroplast thylakoid membrane. Functionally, essential for the assembly of the photosystem I (PSI) complex. May act as a chaperone-like factor to guide the assembly of the PSI subunits. The protein is Photosystem I assembly protein Ycf3 of Oenothera elata subsp. hookeri (Hooker's evening primrose).